A 551-amino-acid polypeptide reads, in one-letter code: MADGVDHIDIYADVGEEFNQEAEYGGHDQIDLYDDVISPSANNGDAPEDRDYMDTLPPTVGDDVGKGAAPNVVYTYTGKRIALYIGNLTWWTTDEDLTEAVHSLGVNDILEIKFFENRANGQSKGFALVGVGSEASSKKLMDLLPKRELHGQSPVVTPCNKQFLSQFEMQSRKTTQSGQMSGEGKAGPPGGGSRAAFPQGGRGRGRFPGAVPGGDRFPGPAGPGGPPPPFPAGQTPPRPPLGPPGPPGPPGPPPPGQVLPPPLAGPPNRGDRPPPPVLFPGQPFGQPPLGPLPPGPPPPVPGYGPPPGPPPPQQGPPPPPGPFPPRPPGPLGPPLTLAPPPHLPGPPPGAPPPAPHVNPAFFPPPTNSGMPTSDSRGPPPTDPYGRPPPYDRGDYGPPGREMDTARTPLSEAEFEEIMNRNRAISSSAISRAVSDASAGDYGSAIETLVTAISLIKQSKVSADDRCKVLISSLQDCLHGIESKSYGSGSRRERSRERDHSRSREKSRRHKSRSRDRHDDYYRERSRERERHRDRDRDRDRERDREREYRHR.

The interval 1-213 (MADGVDHIDI…RGRFPGAVPG (213 aa)) is necessary for interaction with NXF1. One can recognise an RRM domain in the interval 81–161 (IALYIGNLTW…QSPVVTPCNK (81 aa)). The segment at 81-161 (IALYIGNLTW…QSPVVTPCNK (81 aa)) is necessary for interaction with NUDT21/CPSF5. Residues 81 to 161 (IALYIGNLTW…QSPVVTPCNK (81 aa)) form a necessary for nuclear paraspeckles localization region. Thr-157 bears the Phosphothreonine mark. The span at 169 to 180 (MQSRKTTQSGQM) shows a compositional bias: polar residues. Disordered stretches follow at residues 169–411 (MQSR…PLSE) and 477–551 (LHGI…YRHR). The span at 184-193 (GKAGPPGGGS) shows a compositional bias: gly residues. The short motif at 202 to 206 (RGRGR) is the GAR element. Residues 207–219 (FPGAVPGGDRFPG) are compositionally biased toward low complexity. Pro residues-rich tracts occupy residues 220–265 (PAGP…PLAG), 285–366 (GQPP…PPPT), and 377–388 (GPPPTDPYGRPP). Basic and acidic residues predominate over residues 389–404 (PYDRGDYGPPGREMDT). A phosphothreonine mark is found at Thr-404 and Thr-407. The segment at 404–551 (TARTPLSEAE…RDREREYRHR (148 aa)) is sufficient for nuclear speckle localization. Residues 405-551 (ARTPLSEAEF…RDREREYRHR (147 aa)) are necessary for RNA-binding. Positions 481–551 (ESKSYGSGSR…RDREREYRHR (71 aa)) are necessary for interaction with SRSF3, SRSF7 and TRA2B/SFRS10. A compositionally biased stretch (basic and acidic residues) spans 489-503 (SRRERSRERDHSRSR). Positions 490 to 551 (RRERSRERDH…RDREREYRHR (62 aa)) are arg/Ser-rich domain. Ser-494, Ser-500, Ser-511, Ser-513, and Ser-525 each carry phosphoserine. Basic residues predominate over residues 504–514 (EKSRRHKSRSR). A sufficient for nuclear targeting region spans residues 510-551 (KSRSRDRHDDYYRERSRERERHRDRDRDRDRERDREREYRHR). Positions 515–551 (DRHDDYYRERSRERERHRDRDRDRDRERDREREYRHR) are enriched in basic and acidic residues.

The protein belongs to the RRM CPSF6/7 family. Component of the cleavage factor Im (CFIm) complex which is a heterotetramer composed of two subunits of NUDT21/CPSF5 and two subunits of CPSF6 or CPSF7 or a heterodimer of CPSF6 and CPSF7. The cleavage factor Im (CFIm) complex associates with the CPSF and CSTF complexes to promote the assembly of the core mRNA 3'-processing machinery. Associates with the exon junction complex (EJC). Associates with the 80S ribosome particle. Interacts (via the RRM domain) with NUDT21/CPSF5; this interaction is direct and enhances binding to RNA. Interacts (via Arg/Ser-rich domain) with FIP1L1 (preferentially via unphosphorylated form and Arg/Glu/Asp-rich domain); this interaction mediates, at least in part, the interaction between the CFIm and CPSF complexes and may be inhibited by CPSF6 hyper-phosphorylation. Interacts (via N-terminus) with NXF1; this interaction is direct. Interacts with SRSF3. Interacts with SRSF7. Interacts with SNRNP70. Interacts with TRA2B/SFRS10. Interacts with UPF1. Interacts with UPF3B. Interacts with VIRMA. Interacts (via Arg/Ser-rich domain) with TNPO3; promoting nuclear import of CPSF6 independently of its phosphorylation status. Interacts with YTHDC1. Post-translationally, phosphorylated. Phosphorylated in the Arg/Ser-rich domain by SRPK1, in vitro. In terms of processing, symmetrically dimethylated on arginine residues by PRMT5 in a WDR77- and CLNS1A-dependent manner. Asymmetrically dimethylated on arginine residues by PRMT1. Symmetrically dimethylated on arginine residues in the GAR motif by PRMT5 in a WDR77- and CLNS1A-dependent manner. Asymmetrically dimethylated on arginine residues in the GAR motif by PRMT1. In terms of tissue distribution, expressed in testis. Expressed in male germ cells (at protein level).

Its subcellular location is the nucleus. The protein resides in the nucleoplasm. It localises to the nucleus speckle. It is found in the cytoplasm. Functionally, component of the cleavage factor Im (CFIm) complex that functions as an activator of the pre-mRNA 3'-end cleavage and polyadenylation processing required for the maturation of pre-mRNA into functional mRNAs. CFIm contributes to the recruitment of multiprotein complexes on specific sequences on the pre-mRNA 3'-end, so called cleavage and polyadenylation signals (pA signals). Most pre-mRNAs contain multiple pA signals, resulting in alternative cleavage and polyadenylation (APA) producing mRNAs with variable 3'-end formation. The CFIm complex acts as a key regulator of cleavage and polyadenylation site choice during APA through its binding to 5'-UGUA-3' elements localized in the 3'-untranslated region (UTR) for a huge number of pre-mRNAs. CPSF6 enhances NUDT21/CPSF5 binding to 5'-UGUA-3' elements localized upstream of pA signals and promotes RNA looping, and hence activates directly the mRNA 3'-processing machinery. Plays a role in mRNA export. The polypeptide is Cleavage and polyadenylation specificity factor subunit 6 (Mus musculus (Mouse)).